The primary structure comprises 205 residues: Holliday junction branch migration complex subunit RuvA (205 aa).

The domain I stretch occupies residues M1–A64. A domain II region spans residues N65–I143. The segment at G144–G152 is flexible linker. The segment at A153 to R205 is domain III.

Belongs to the RuvA family. In terms of assembly, homotetramer. Forms an RuvA(8)-RuvB(12)-Holliday junction (HJ) complex. HJ DNA is sandwiched between 2 RuvA tetramers; dsDNA enters through RuvA and exits via RuvB. An RuvB hexamer assembles on each DNA strand where it exits the tetramer. Each RuvB hexamer is contacted by two RuvA subunits (via domain III) on 2 adjacent RuvB subunits; this complex drives branch migration. In the full resolvosome a probable DNA-RuvA(4)-RuvB(12)-RuvC(2) complex forms which resolves the HJ.

It is found in the cytoplasm. In terms of biological role, the RuvA-RuvB-RuvC complex processes Holliday junction (HJ) DNA during genetic recombination and DNA repair, while the RuvA-RuvB complex plays an important role in the rescue of blocked DNA replication forks via replication fork reversal (RFR). RuvA specifically binds to HJ cruciform DNA, conferring on it an open structure. The RuvB hexamer acts as an ATP-dependent pump, pulling dsDNA into and through the RuvAB complex. HJ branch migration allows RuvC to scan DNA until it finds its consensus sequence, where it cleaves and resolves the cruciform DNA. This is Holliday junction branch migration complex subunit RuvA from Brucella anthropi (strain ATCC 49188 / DSM 6882 / CCUG 24695 / JCM 21032 / LMG 3331 / NBRC 15819 / NCTC 12168 / Alc 37) (Ochrobactrum anthropi).